We begin with the raw amino-acid sequence, 254 residues long: 3-deoxy-manno-octulosonate cytidylyltransferase (254 aa).

Belongs to the KdsB family.

It is found in the cytoplasm. The enzyme catalyses 3-deoxy-alpha-D-manno-oct-2-ulosonate + CTP = CMP-3-deoxy-beta-D-manno-octulosonate + diphosphate. It functions in the pathway nucleotide-sugar biosynthesis; CMP-3-deoxy-D-manno-octulosonate biosynthesis; CMP-3-deoxy-D-manno-octulosonate from 3-deoxy-D-manno-octulosonate and CTP: step 1/1. It participates in bacterial outer membrane biogenesis; lipopolysaccharide biosynthesis. Its function is as follows. Activates KDO (a required 8-carbon sugar) for incorporation into bacterial lipopolysaccharide in Gram-negative bacteria. This chain is 3-deoxy-manno-octulosonate cytidylyltransferase, found in Bordetella petrii (strain ATCC BAA-461 / DSM 12804 / CCUG 43448).